A 135-amino-acid polypeptide reads, in one-letter code: ATP synthase epsilon chain (135 aa).

Belongs to the ATPase epsilon chain family. In terms of assembly, F-type ATPases have 2 components, CF(1) - the catalytic core - and CF(0) - the membrane proton channel. CF(1) has five subunits: alpha(3), beta(3), gamma(1), delta(1), epsilon(1). CF(0) has three main subunits: a, b and c.

It localises to the cell inner membrane. Its function is as follows. Produces ATP from ADP in the presence of a proton gradient across the membrane. In Rhizobium johnstonii (strain DSM 114642 / LMG 32736 / 3841) (Rhizobium leguminosarum bv. viciae), this protein is ATP synthase epsilon chain.